The sequence spans 151 residues: Transcriptional repressor NrdR (151 aa).

A zinc finger spans residues Cys-3–Cys-34. Residues Ile-49–Thr-139 form the ATP-cone domain.

This sequence belongs to the NrdR family. Zn(2+) is required as a cofactor.

Functionally, negatively regulates transcription of bacterial ribonucleotide reductase nrd genes and operons by binding to NrdR-boxes. This chain is Transcriptional repressor NrdR, found in Clostridium acetobutylicum (strain ATCC 824 / DSM 792 / JCM 1419 / IAM 19013 / LMG 5710 / NBRC 13948 / NRRL B-527 / VKM B-1787 / 2291 / W).